A 193-amino-acid polypeptide reads, in one-letter code: MGPWWALWLILTLPQILGGQSPTMPQGFSQMTSFQSNKFQGEWFVLGLADNTYKREHRPLLHSFITLFKLRDNSEFQVTNSMTRGKHCSTWSYTLIPTNKPGQFTRDNRGSGPGADKENIQVIETDYVKFALVLSLRQASNQNITRVSLLGRDWKITHKTIDRFICLTKTQNLTKNNLLFPDLTDWLLDPKVC.

The first 19 residues, 1–19 (MGPWWALWLILTLPQILGG), serve as a signal peptide directing secretion. A disulfide bridge links Cys88 with Cys193. Asn143 and Asn172 each carry an N-linked (GlcNAc...) asparagine glycan.

This sequence belongs to the calycin superfamily. Lipocalin family. Monomer.

The protein resides in the secreted. Its function is as follows. Binds all-trans retinoic acid and may act as a retinoid carrier protein within the epididymis. May play a role in male fertility. The chain is Epididymal-specific lipocalin-12 (Lcn12) from Rattus norvegicus (Rat).